A 1958-amino-acid polypeptide reads, in one-letter code: Rho GTPase-activating protein 21 (1958 aa).

Positions 1–42 (MMATRRTGLSEGDGDKLKACEVSKNKDGKEQSETVSLSEDET) are disordered. Residues 13–32 (DGDKLKACEVSKNKDGKEQS) are compositionally biased toward basic and acidic residues. A phosphoserine mark is found at serine 36 and serine 57. A PDZ domain is found at 50–159 (TVTLKRTSQG…TLELSVMPKD (110 aa)). Composition is skewed to polar residues over residues 286–295 (SNRNNHTGPS), 306–325 (SEQT…LSIP), and 418–436 (ASQS…TTLQ). 2 disordered regions span residues 286–325 (SNRN…LSIP) and 418–458 (ASQS…QRSV). Over residues 448–458 (PQSVQIRQRSV) the composition is skewed to low complexity. Serine 459 carries the phosphoserine modification. Residues arginine 554 and arginine 575 each carry the omega-N-methylarginine modification. Phosphoserine occurs at positions 612, 616, and 625. Polar residues predominate over residues 659-687 (SLLNQQTWVRTDSAPDQQVETGKSPSLSG). Residues 659 to 751 (SLLNQQTWVR…PSGRQTPQPL (93 aa)) are disordered. Position 717 is a phosphoserine (serine 717). A compositionally biased stretch (basic and acidic residues) spans 729 to 742 (LDNKEAVILREKPP). Position 747 is a phosphothreonine (threonine 747). Serine 857, serine 862, and serine 881 each carry phosphoserine. The segment at 859 to 885 (DHESVGPPSLDAQPNSKTERSKSYDEG) is disordered. Residues 875-885 (KTERSKSYDEG) show a composition bias toward basic and acidic residues. At tyrosine 882 the chain carries Phosphotyrosine. A phosphoserine mark is found at serine 924, serine 926, serine 954, serine 1099, and serine 1115. An interaction with ARF1 and ARF6 region spans residues 930-1097 (SDAAKEGWLH…AKSEPKTQSP (168 aa)). A PH domain is found at 931 to 1040 (DAAKEGWLHF…WIKTIQESSN (110 aa)). Positions 1086–1133 (LGAKSEPKTQSPHSPKEESERKLLSKDDTSPPKDKGTWRKGIPSIMRK) are disordered. Basic and acidic residues predominate over residues 1099–1122 (SPKEESERKLLSKDDTSPPKDKGT). Residues 1147-1339 (VRLDDCPPAH…TLIQHHDWFF (193 aa)) form the Rho-GAP domain. Disordered stretches follow at residues 1348–1401 (LTTV…GSGK), 1418–1575 (SRKR…KHSE), 1598–1642 (SLDS…SEFP), and 1655–1686 (RGKL…SSLD). Residues 1349-1362 (TTVQEESTVDSQPV) show a composition bias toward polar residues. Low complexity predominate over residues 1383-1401 (SDSATSDSTKSKGSWGSGK). Phosphoserine is present on residues serine 1418, serine 1432, and serine 1433. Composition is skewed to basic and acidic residues over residues 1441 to 1466 (FFKK…ETLG) and 1477 to 1493 (NSTR…KISL). Lysine 1444 participates in a covalent cross-link: Glycyl lysine isopeptide (Lys-Gly) (interchain with G-Cter in SUMO). Serine 1504 carries the phosphoserine modification. Position 1516 is a phosphothreonine (threonine 1516). Position 1527 is a phosphoserine (serine 1527). Residues 1544–1559 (SDSGTLLSTSSQASLA) are compositionally biased toward low complexity. Residues 1592-1861 (SATYLTSLDS…WLARERLRTS (270 aa)) form an interaction with CTNNA1 region. Residues 1603–1612 (RLSPEVQSVA) are compositionally biased toward polar residues. Residues 1624–1634 (SELISEGRPVE) show a composition bias toward basic and acidic residues. Serine 1669 is subject to Phosphoserine. The segment covering 1671-1686 (GSELSCTEGSLTSSLD) has biased composition (polar residues). Threonine 1682 is modified (phosphothreonine). Serine 1742 carries the post-translational modification Phosphoserine. A disordered region spans residues 1860–1958 (TSTSDLSRGE…GSKAEFHPCL (99 aa)). Residues 1874 to 1909 (QTENPSTREIATTDTPLSLHCNTGSSSSTLASTNRP) show a composition bias toward polar residues. The residue at position 1917 (serine 1917) is a Phosphoserine. Residues 1918-1931 (PDQINGESFQNVSK) show a composition bias toward polar residues.

In terms of assembly, interacts with GTP-bound ARF1 and ARF6. Interacts with CTNNA1. Post-translationally, sumoylated with SUMO2 and SUMO3 in proliferating lymphocytes. In terms of tissue distribution, widely expressed with higher expression in brain, heart, skeletal muscle and placenta.

The protein localises to the golgi apparatus membrane. The protein resides in the cell junction. It is found in the cytoplasmic vesicle membrane. Its subcellular location is the cytoplasm. It localises to the cytoskeleton. In terms of biological role, functions as a GTPase-activating protein (GAP) for RHOA and CDC42. Downstream partner of ARF1 which may control Golgi apparatus structure and function. Also required for CTNNA1 recruitment to adherens junctions. The polypeptide is Rho GTPase-activating protein 21 (ARHGAP21) (Homo sapiens (Human)).